A 174-amino-acid polypeptide reads, in one-letter code: Ribosome maturation factor RimM (174 aa).

The PRC barrel domain occupies 98-171 (EGEFYFHEII…KIEIELMEGL (74 aa)).

This sequence belongs to the RimM family. As to quaternary structure, binds ribosomal protein uS19.

It localises to the cytoplasm. Functionally, an accessory protein needed during the final step in the assembly of 30S ribosomal subunit, possibly for assembly of the head region. Essential for efficient processing of 16S rRNA. May be needed both before and after RbfA during the maturation of 16S rRNA. It has affinity for free ribosomal 30S subunits but not for 70S ribosomes. This Bacillus subtilis (strain 168) protein is Ribosome maturation factor RimM.